An 814-amino-acid polypeptide reads, in one-letter code: Leucine-rich repeat-containing protein 41 (814 aa).

The tract at residues 45 to 54 (ALFELCGRAV) is interaction with Elongin BC complex. Phosphoserine is present on residues Ser-155, Ser-276, and Ser-326. Residues 265–408 (LCGEASRGRA…KKGARTRQGC (144 aa)) are disordered. Thr-327 carries the phosphothreonine modification. Residues 354–385 (TKRPPSAPATTSSASASSSTSSSKRAPASSAP) are compositionally biased toward low complexity. Residue Ser-375 is modified to Phosphoserine. A compositionally biased stretch (basic residues) spans 389-403 (PLKRFKRAAGKKGAR). LRR repeat units follow at residues 489 to 509 (WVSLESLTLSYNGLGSNIFRL), 520 to 532 (AGCRLRALHLSDL), 533 to 557 (FSPLPILELTRAIVRALPLLRVLSI), 615 to 637 (SGSLQQLSLDSATFASPQDFGLV), 638 to 661 (LQTLKEYNLTLKRLSFHDMNLADC), 703 to 730 (NSTLKGLRLPGNRLGNAGLLALADVFSE), and 733 to 754 (SSSLCQLDISSNCIKPDGLLEF).

As to quaternary structure, part of a E3 ubiquitin ligase complex with elongin BC complex (ELOB and ELOC), RBX1 and CUL5.

The chain is Leucine-rich repeat-containing protein 41 (LRRC41) from Bos taurus (Bovine).